We begin with the raw amino-acid sequence, 132 residues long: Gonadotropin subunit beta-1 (132 aa).

The first 17 residues, 1 to 17 (MMRGVTMVLLLPMLVWA), serve as a signal peptide directing secretion. 5 disulfide bridges follow: cysteine 25-cysteine 73, cysteine 39-cysteine 88, cysteine 50-cysteine 104, cysteine 54-cysteine 106, and cysteine 109-cysteine 116. 2 N-linked (GlcNAc...) asparagine glycosylation sites follow: asparagine 29 and asparagine 46.

The protein belongs to the glycoprotein hormones subunit beta family. Heterodimer of an alpha and a beta chain.

It localises to the secreted. In terms of biological role, involved in gametogenesis and steroidogenesis. The protein is Gonadotropin subunit beta-1 (cgba) of Ictalurus punctatus (Channel catfish).